Consider the following 164-residue polypeptide: Lipoprotein signal peptidase (164 aa).

The next 4 membrane-spanning stretches (helical) occupy residues 8–28 (IVAAVAALIADQASKLWLLFV), 39–59 (VTPFFDLVLAWNTGISYGWFQ), 64–84 (VGATILLAIKAGAVVLLAIWM), and 91–111 (LATIGLGLIIGGAIGNAIDRF). Residues D118 and D140 contribute to the active site. Residues 131-151 (YSWYVFNLADVAIVAGVIALL) traverse the membrane as a helical segment.

Belongs to the peptidase A8 family.

The protein localises to the cell inner membrane. It carries out the reaction Release of signal peptides from bacterial membrane prolipoproteins. Hydrolyzes -Xaa-Yaa-Zaa-|-(S,diacylglyceryl)Cys-, in which Xaa is hydrophobic (preferably Leu), and Yaa (Ala or Ser) and Zaa (Gly or Ala) have small, neutral side chains.. It functions in the pathway protein modification; lipoprotein biosynthesis (signal peptide cleavage). In terms of biological role, this protein specifically catalyzes the removal of signal peptides from prolipoproteins. The chain is Lipoprotein signal peptidase from Nitrobacter hamburgensis (strain DSM 10229 / NCIMB 13809 / X14).